Here is a 263-residue protein sequence, read N- to C-terminus: Phosphate import ATP-binding protein PstB (263 aa).

One can recognise an ABC transporter domain in the interval 17–258; it reads ISVKNLDFFY…PKRKETEDYI (242 aa). An ATP-binding site is contributed by 49–56; sequence GPSGCGKS.

It belongs to the ABC transporter superfamily. Phosphate importer (TC 3.A.1.7) family. In terms of assembly, the complex is composed of two ATP-binding proteins (PstB), two transmembrane proteins (PstC and PstA) and a solute-binding protein (PstS).

Its subcellular location is the cell inner membrane. The enzyme catalyses phosphate(out) + ATP + H2O = ADP + 2 phosphate(in) + H(+). Part of the ABC transporter complex PstSACB involved in phosphate import. Responsible for energy coupling to the transport system. The polypeptide is Phosphate import ATP-binding protein PstB (Polaromonas sp. (strain JS666 / ATCC BAA-500)).